Consider the following 529-residue polypeptide: Bifunctional purine biosynthesis protein PurH (529 aa).

The region spanning 1–148 (MQQRRPVRRA…KNHKDVAIVV (148 aa)) is the MGS-like domain. Lys-287 is subject to N6-acetyllysine.

Belongs to the PurH family.

The catalysed reaction is (6R)-10-formyltetrahydrofolate + 5-amino-1-(5-phospho-beta-D-ribosyl)imidazole-4-carboxamide = 5-formamido-1-(5-phospho-D-ribosyl)imidazole-4-carboxamide + (6S)-5,6,7,8-tetrahydrofolate. It catalyses the reaction IMP + H2O = 5-formamido-1-(5-phospho-D-ribosyl)imidazole-4-carboxamide. The protein operates within purine metabolism; IMP biosynthesis via de novo pathway; 5-formamido-1-(5-phospho-D-ribosyl)imidazole-4-carboxamide from 5-amino-1-(5-phospho-D-ribosyl)imidazole-4-carboxamide (10-formyl THF route): step 1/1. It participates in purine metabolism; IMP biosynthesis via de novo pathway; IMP from 5-formamido-1-(5-phospho-D-ribosyl)imidazole-4-carboxamide: step 1/1. This is Bifunctional purine biosynthesis protein PurH from Escherichia coli O17:K52:H18 (strain UMN026 / ExPEC).